A 540-amino-acid chain; its full sequence is MELFIKLPFIQPIPFSIILVTTVSIVLLYSVFFWVTDKKKKRKKAPNAAGAWPLIGHLRLLMNDKEPLYRALGSMADKYGPAFNIRLGNQEVLVVSNWEMVKQCFGNQNDKLFSNRQTTLAAKYMLNQTTSSGFAPYGPYWRELRKIMVQQLLSKQSLESWKHLKIKEMDASFSKLNELCNNNGTGTATLIRMDEWFAELTFNVIARNVFGYQSGGRSTALTNGDTESKGERYKKTLEEALHLMSIFAVSDIFPSLEWVDRLRGLIRNMKRFGDELNSIAGCLIEEHRQKRLQSVSKSDKGVGDEQDFVDVLLSVAEKSQLPGDDPDLVIKSMILEIVSGGSETTSSTLTWALCLLLNHPHVLKKAKEELDTHVGKDRHVEESDTPKLVYINAIIKESMRLYPNGAMLDRLALEECEVGGFHVPAGGRLFVNVWKIQRDPSVWENPLEFKPERWFLSNGEKMDVDYKGHNHEFIPFGIGRRMCAGMLWASEVIHLVLPRLIHGFDMKAASANGKVDMAEMAGMVICFKKTPLEVMVNPRE.

Residues 15 to 35 (FSIILVTTVSIVLLYSVFFWV) traverse the membrane as a helical segment. Residue Cys-483 coordinates heme.

The protein belongs to the cytochrome P450 family. It depends on heme as a cofactor. As to expression, highly expressed in capsules. Expressed is stems.

The protein resides in the membrane. It carries out the reaction (13S,14R)-13-O-acetyl-1-hydroxy-N-methylcanadine + reduced [NADPH--hemoprotein reductase] + O2 = (13S,14R)-13-O-acetyl-1,8-dihydroxy-N-methylcanadine + oxidized [NADPH--hemoprotein reductase] + H2O + H(+). The protein operates within alkaloid biosynthesis. Cytochrome P450 involved in the biosynthesis of the benzylisoquinoline alkaloid noscapine. Converts (13S,14R)-13-O-acetyl-1-hydroxy-N-methylcanadine to (13S,14R)-13-O-acetyl-1,8-dihydroxy-N-methylcanadine. This chain is (13S,14R)-13-O-acetyl-1-hydroxy-N-methylcanadine 8-hydroxylase CYP82X1, found in Papaver somniferum (Opium poppy).